We begin with the raw amino-acid sequence, 974 residues long: Isoleucine--tRNA ligase (974 aa).

The 'HIGH' region motif lies at 69 to 79; the sequence is PYANGALHMGH. Glu585 provides a ligand contact to L-isoleucyl-5'-AMP. The short motif at 626–630 is the 'KMSKS' region element; the sequence is KMSKS. Lys629 lines the ATP pocket. Zn(2+)-binding residues include Cys939, Cys942, Cys959, and Cys962.

The protein belongs to the class-I aminoacyl-tRNA synthetase family. IleS type 1 subfamily. In terms of assembly, monomer. The cofactor is Zn(2+).

The protein resides in the cytoplasm. It catalyses the reaction tRNA(Ile) + L-isoleucine + ATP = L-isoleucyl-tRNA(Ile) + AMP + diphosphate. Its function is as follows. Catalyzes the attachment of isoleucine to tRNA(Ile). As IleRS can inadvertently accommodate and process structurally similar amino acids such as valine, to avoid such errors it has two additional distinct tRNA(Ile)-dependent editing activities. One activity is designated as 'pretransfer' editing and involves the hydrolysis of activated Val-AMP. The other activity is designated 'posttransfer' editing and involves deacylation of mischarged Val-tRNA(Ile). This chain is Isoleucine--tRNA ligase, found in Parasynechococcus marenigrum (strain WH8102).